The following is a 195-amino-acid chain: Interferon tau-5 (195 aa).

The first 23 residues, 1–23, serve as a signal peptide directing secretion; the sequence is MAFVLSLLMALVLVSYGPGGSLG. Disulfide bonds link cysteine 24–cysteine 122 and cysteine 52–cysteine 162.

Belongs to the alpha/beta interferon family. IFN-alphaII subfamily. Constitutively and exclusively expressed in the mononuclear cells of the extraembryonic trophectoderm.

The protein localises to the secreted. Functionally, paracrine hormone primarily responsible for maternal recognition of pregnancy. Interacts with endometrial receptors, probably type I interferon receptors, and blocks estrogen receptor expression, preventing the estrogen-induced increase in oxytocin receptor expression in the endometrium. This results in the suppression of the pulsatile endometrial release of the luteolytic hormone prostaglandin F2-alpha, hindering the regression of the corpus luteum (luteolysis) and therefore a return to ovarian cyclicity. This, and a possible direct effect of IFN-tau on prostaglandin synthesis, leads in turn to continued ovarian progesterone secretion, which stimulates the secretion by the endometrium of the nutrients required for the growth of the conceptus. In summary, displays particularly high antiviral and antiproliferative potency concurrently with particular weak cytotoxicity, high antiluteolytic activity and immunomodulatory properties. In contrast with other IFNs, IFN-tau is not virally inducible. This Ovis aries (Sheep) protein is Interferon tau-5 (IFNT5).